Here is a 42-residue protein sequence, read N- to C-terminus: Photosystem I reaction center subunit IX (42 aa).

A helical membrane pass occupies residues 7-27 (YLSVAPVLSTLWFVSLAGLLI).

Belongs to the PsaJ family.

It is found in the plastid. Its subcellular location is the chloroplast thylakoid membrane. Its function is as follows. May help in the organization of the PsaE and PsaF subunits. This is Photosystem I reaction center subunit IX from Capsella bursa-pastoris (Shepherd's purse).